Consider the following 537-residue polypeptide: Chaperonin GroEL (537 aa).

ATP-binding positions include 29 to 32 (TLGP), 86 to 90 (DGTTT), glycine 413, and aspartate 492.

It belongs to the chaperonin (HSP60) family. In terms of assembly, forms a cylinder of 14 subunits composed of two heptameric rings stacked back-to-back. Interacts with the co-chaperonin GroES.

It localises to the cytoplasm. It carries out the reaction ATP + H2O + a folded polypeptide = ADP + phosphate + an unfolded polypeptide.. Functionally, together with its co-chaperonin GroES, plays an essential role in assisting protein folding. The GroEL-GroES system forms a nano-cage that allows encapsulation of the non-native substrate proteins and provides a physical environment optimized to promote and accelerate protein folding. The sequence is that of Chaperonin GroEL from Dehalococcoides mccartyi (strain ATCC BAA-2100 / JCM 16839 / KCTC 5957 / BAV1).